The chain runs to 694 residues: Lon-like protease BrxL (694 aa).

It belongs to the BrxL family.

In terms of biological role, BREX systems (bacteriophage exclusion) provide immunity against bacteriophage. Part of a type 1 BREX system which protects against dsDNA phage. This system allows phage adsorption but prevents phage DNA replication, without degradation of the phage DNA. Methylation of bacterial DNA by PglX guides self/non-self discrimination. When the brxA-brxB-brxC-pglX-pglZ-brxL genes are transformed into a susceptible E.coli strain (BW25113) they confer very high resistance to infection by bacteriophage VR7 and VpaE1, about 100-fold protection against lambda, T5 and T7 and no protection against RNA phage Qbeta, ssDNA phage M13 or dSDNA phage T4 and VR5. Glycosylated phage DNA is not susceptible to BREX. The BREX system does not confer resistance to lysogenic lambda phage, i.e. prophage that are integrated into the chromosomal DNA and then induced to form phage. Expression of this protein alone is toxic. This Escherichia coli O9:H4 (strain HS) protein is Lon-like protease BrxL.